The chain runs to 130 residues: Small ribosomal subunit protein uS9 (130 aa).

Belongs to the universal ribosomal protein uS9 family.

This is Small ribosomal subunit protein uS9 from Xanthomonas axonopodis pv. citri (strain 306).